The chain runs to 284 residues: Acetylglutamate kinase (284 aa).

Residues 64 to 65 (GG), Arg86, and Asn181 each bind substrate.

It belongs to the acetylglutamate kinase family. ArgB subfamily.

It localises to the cytoplasm. The enzyme catalyses N-acetyl-L-glutamate + ATP = N-acetyl-L-glutamyl 5-phosphate + ADP. The protein operates within amino-acid biosynthesis; L-arginine biosynthesis; N(2)-acetyl-L-ornithine from L-glutamate: step 2/4. Functionally, catalyzes the ATP-dependent phosphorylation of N-acetyl-L-glutamate. In Nitratiruptor sp. (strain SB155-2), this protein is Acetylglutamate kinase.